Here is a 504-residue protein sequence, read N- to C-terminus: Protein Dok-7 (504 aa).

One can recognise a PH domain in the interval 4–109; sequence AALVEGQVKL…WDARIRYALG (106 aa). An IRS-type PTB domain is found at 105 to 210; sequence RYALGEVHRF…RGISPTKGPF (106 aa). Disordered regions lie at residues 210-229, 249-351, and 411-483; these read FGLR…TVEE, SHAG…YSSS, and LCLA…PHAG. Low complexity-rich tracts occupy residues 263–279 and 288–310; these read LSSS…SASS and SSSS…AGEA. Positions 331-341 are enriched in polar residues; that stretch reads GRQSSSDSGIA.

In terms of assembly, homodimer. Forms a heterotetramer composed of 2 DOK7 and 2 MUSK molecules which facilitates MUSK trans-autophosphorylation on tyrosine residue and activation. Interacts (via IRS-type PTB domain) with MUSK (via cytoplasmic part); requires MUSK phosphorylation. Preferentially expressed in skeletal muscle and heart. Present in thigh muscle, diaphragm and heart but not in the liver or spleen (at protein level).

Its subcellular location is the cell membrane. The protein localises to the synapse. Probable muscle-intrinsic activator of MUSK that plays an essential role in neuromuscular synaptogenesis. Acts in aneural activation of MUSK and subsequent acetylcholine receptor (AchR) clustering in myotubes. Induces autophosphorylation of MUSK. The polypeptide is Protein Dok-7 (DOK7) (Homo sapiens (Human)).